The following is a 247-amino-acid chain: Ribosomal RNA small subunit methyltransferase J (247 aa).

S-adenosyl-L-methionine-binding positions include 101–102, 117–118, 153–154, and aspartate 171; these read RD, ER, and SS.

It belongs to the methyltransferase superfamily. RsmJ family.

The protein localises to the cytoplasm. It catalyses the reaction guanosine(1516) in 16S rRNA + S-adenosyl-L-methionine = N(2)-methylguanosine(1516) in 16S rRNA + S-adenosyl-L-homocysteine + H(+). In terms of biological role, specifically methylates the guanosine in position 1516 of 16S rRNA. The chain is Ribosomal RNA small subunit methyltransferase J from Photorhabdus laumondii subsp. laumondii (strain DSM 15139 / CIP 105565 / TT01) (Photorhabdus luminescens subsp. laumondii).